Here is a 421-residue protein sequence, read N- to C-terminus: MANALIEDLKWRGLIYQQTDEEGIEELLNKEQVTLYCGADPTADSLHIGHLLPFLTLRRFQEHGHRPIVLIGGGTGMIGDPSGKSEERVLQTESQVEANVKGLSNQMHRLFEFGSDKGAKLVNNKDWLGQISLISFLRDYGKHVGVNYMLGKDSIQTRLEHGISYTEFTYTILQAIDFGYLNRELNCKIQVGGSDQWGNITSGIELMRRMYGQTEAYGLTIPLVTKSDGKKFGKSESGAVWLDPEKTSPYEFYQFWINQSDEDVIKFLKYFTFLEKEEINRLEQSKNEAPHLREAQKALAENVTKFIHGEAALKDAIRISKALFSGDLKSLSAKELKEGFKDVPQVTLSTKTTNIVEALIETGIASSKRQAREDVNNGAIYINGERQQSVDYELSSKDLIEDEITIIRRGKKKYFMVNYQS.

L-tyrosine is bound at residue tyrosine 36. A 'HIGH' region motif is present at residues 41 to 50; sequence PTADSLHIGH. Residues tyrosine 170 and glutamine 174 each coordinate L-tyrosine. The 'KMSKS' region signature appears at 231-235; the sequence is KFGKS. Lysine 234 contacts ATP. Positions 353–420 constitute an S4 RNA-binding domain; the sequence is TNIVEALIET…KKKYFMVNYQ (68 aa).

The protein belongs to the class-I aminoacyl-tRNA synthetase family. TyrS type 1 subfamily. Homodimer.

The protein localises to the cytoplasm. The enzyme catalyses tRNA(Tyr) + L-tyrosine + ATP = L-tyrosyl-tRNA(Tyr) + AMP + diphosphate + H(+). Catalyzes the attachment of tyrosine to tRNA(Tyr) in a two-step reaction: tyrosine is first activated by ATP to form Tyr-AMP and then transferred to the acceptor end of tRNA(Tyr). The protein is Tyrosine--tRNA ligase of Staphylococcus epidermidis (strain ATCC 35984 / DSM 28319 / BCRC 17069 / CCUG 31568 / BM 3577 / RP62A).